The following is a 961-amino-acid chain: E3 ubiquitin-protein ligase TRIM37 (961 aa).

M1 bears the N-acetylmethionine mark. The RING-type; degenerate zinc-finger motif lies at C15–R55. The segment at N90 to L132 adopts a B box-type zinc-finger fold. 4 residues coordinate Zn(2+): C95, H98, C117, and H124. Positions L132–K234 form a coiled coil. The 128-residue stretch at Y276–V403 folds into the MATH domain. The stretch at I419–S450 forms a coiled coil. Disordered stretches follow at residues T447–L514, V529–N561, S645–A665, A776–A811, and L874–R961. Residue S454 is modified to Phosphoserine. Positions K504 to L514 are enriched in basic and acidic residues. Residues S535–S545 show a composition bias toward low complexity. The span at E548–N561 shows a compositional bias: acidic residues. A compositionally biased stretch (basic and acidic residues) spans A776 to G787. A compositionally biased stretch (low complexity) spans G795 to H806. Residues S903–E915 show a composition bias toward acidic residues.

Belongs to the TRIM/RBCC family. As to quaternary structure, associates with the PRC2/EED-EZH2 complex. Auto-ubiquitinated. As to expression, highly expressed in testis and brain. In embryonic tissues, expressed in epithelia, including ducts of the developing pancreas, epithelium of the midgut and nasal epithelium. In adult, detected in the central and peripheral nervous systems, including enteric ganglia, retina and the adrenal medulla (at protein level).

The protein resides in the chromosome. It is found in the cytoplasm. Its subcellular location is the perinuclear region. The protein localises to the peroxisome membrane. The enzyme catalyses S-ubiquitinyl-[E2 ubiquitin-conjugating enzyme]-L-cysteine + [acceptor protein]-L-lysine = [E2 ubiquitin-conjugating enzyme]-L-cysteine + N(6)-ubiquitinyl-[acceptor protein]-L-lysine.. It participates in protein modification; protein ubiquitination. E3 ubiquitin-protein ligase required to prevent centriole reduplication. Probably acts by ubiquitinating positive regulators of centriole reduplication. Mediates monoubiquitination of 'Lys-119' of histone H2A (H2AK119Ub), a specific tag for epigenetic transcriptional repression: associates with some Polycomb group (PcG) multiprotein PRC2-like complex and mediates repression of target genes. Also acts as a positive regulator of peroxisome import by mediating monoubiquitination of PEX5 at 'Lys-472': monoubiquitination promotes PEX5 stabilitation by preventing its polyubiquitination and degradation by the proteasome. This is E3 ubiquitin-protein ligase TRIM37 from Mus musculus (Mouse).